Consider the following 420-residue polypeptide: tRNA(Ile)-lysidine synthase, chloroplastic (420 aa).

Residue 63–68 coordinates ATP; it reads SGGQDS.

The protein belongs to the tRNA(Ile)-lysidine synthase family.

The protein resides in the plastid. It is found in the chloroplast. The enzyme catalyses cytidine(34) in tRNA(Ile2) + L-lysine + ATP = lysidine(34) in tRNA(Ile2) + AMP + diphosphate + H(+). Functionally, ligates lysine onto the cytidine present at position 34 of the AUA codon-specific tRNA(Ile) that contains the anticodon CAU, in an ATP-dependent manner. Cytidine is converted to lysidine, thus changing the amino acid specificity of the tRNA from methionine to isoleucine. In Zygnema circumcarinatum (Green alga), this protein is tRNA(Ile)-lysidine synthase, chloroplastic.